Reading from the N-terminus, the 429-residue chain is L-cysteine:1D-myo-inositol 2-amino-2-deoxy-alpha-D-glucopyranoside ligase (429 aa).

Cysteine 60 contacts Zn(2+). L-cysteinyl-5'-AMP-binding positions include 60 to 63 (CGIT), threonine 75, and 98 to 100 (NIT). Positions 62–72 (ITPYDATHLGH) match the 'HIGH' region motif. Positions 204 to 209 (ERGGDP) match the 'ERGGDP' region motif. Tryptophan 244 contacts L-cysteinyl-5'-AMP. Cysteine 248 contributes to the Zn(2+) binding site. Position 266–268 (266–268 (GSD)) interacts with L-cysteinyl-5'-AMP. Histidine 273 contacts Zn(2+). Isoleucine 300 serves as a coordination point for L-cysteinyl-5'-AMP. Positions 306 to 310 (KMSKS) match the 'KMSKS' region motif.

This sequence belongs to the class-I aminoacyl-tRNA synthetase family. MshC subfamily. As to quaternary structure, monomer. Zn(2+) is required as a cofactor.

The catalysed reaction is 1D-myo-inositol 2-amino-2-deoxy-alpha-D-glucopyranoside + L-cysteine + ATP = 1D-myo-inositol 2-(L-cysteinylamino)-2-deoxy-alpha-D-glucopyranoside + AMP + diphosphate + H(+). Catalyzes the ATP-dependent condensation of GlcN-Ins and L-cysteine to form L-Cys-GlcN-Ins. This Mycolicibacterium vanbaalenii (strain DSM 7251 / JCM 13017 / BCRC 16820 / KCTC 9966 / NRRL B-24157 / PYR-1) (Mycobacterium vanbaalenii) protein is L-cysteine:1D-myo-inositol 2-amino-2-deoxy-alpha-D-glucopyranoside ligase.